Consider the following 202-residue polypeptide: ATP-dependent Clp protease proteolytic subunit (202 aa).

The active-site Nucleophile is Ser106. His131 is an active-site residue.

This sequence belongs to the peptidase S14 family. Fourteen ClpP subunits assemble into 2 heptameric rings which stack back to back to give a disk-like structure with a central cavity, resembling the structure of eukaryotic proteasomes.

The protein resides in the cytoplasm. It catalyses the reaction Hydrolysis of proteins to small peptides in the presence of ATP and magnesium. alpha-casein is the usual test substrate. In the absence of ATP, only oligopeptides shorter than five residues are hydrolyzed (such as succinyl-Leu-Tyr-|-NHMec, and Leu-Tyr-Leu-|-Tyr-Trp, in which cleavage of the -Tyr-|-Leu- and -Tyr-|-Trp bonds also occurs).. Functionally, cleaves peptides in various proteins in a process that requires ATP hydrolysis. Has a chymotrypsin-like activity. Plays a major role in the degradation of misfolded proteins. This chain is ATP-dependent Clp protease proteolytic subunit, found in Shewanella oneidensis (strain ATCC 700550 / JCM 31522 / CIP 106686 / LMG 19005 / NCIMB 14063 / MR-1).